A 662-amino-acid polypeptide reads, in one-letter code: U6 snRNA-specific terminal uridylyltransferase (662 aa).

Mg(2+) contacts are provided by aspartate 183 and aspartate 185. Residues 384–437 (CKFFRELFKYYANFDFTNKAIYGKKAMQKKTLSSAHGGVEESPLMLMDPMDITH) enclose the PAP-associated domain.

Belongs to the DNA polymerase type-B-like family. As to quaternary structure, forms a complex composed of sart-3, terminal uridylyltransferase usip-1 and U6 snRNA; complex formation is mediated by usip-1 and sart-3 binding to U6 snRNA. Requires Mg(2+) as cofactor. The cofactor is Mn(2+). In terms of tissue distribution, ubiquitously expressed.

The protein resides in the nucleus. The protein localises to the nucleoplasm. The enzyme catalyses RNA(n) + UTP = RNA(n)-3'-uridine ribonucleotide + diphosphate. Its function is as follows. Acts as a specific terminal uridylyltransferase for U6 snRNA. Responsible for the addition of UTP at the 3' end of U6 snRNA which stabilizes U6 snRNA. Does not have activity towards modified uridine containing 3'-monophosphorylation or 2'-O-methylation. This is U6 snRNA-specific terminal uridylyltransferase from Caenorhabditis elegans.